The following is a 2155-amino-acid chain: Alpha-tectorin (2155 aa).

The N-terminal stretch at 1–22 (MNYSSFLRIWVSFIFALVQHQA) is a signal peptide. Residues N34, N187, N215, N278, N455, N506, N528, and N560 are each glycosylated (N-linked (GlcNAc...) asparagine). One can recognise an NIDO domain in the interval 98–252 (PFWADVHNGI…GRWAFKVDGK (155 aa)). A VWFC domain is found at 260-314 (CTSRGQFLRRGEVFWDDLNCTVKCRCLDFNNEIYCQEASCSPYEVCEPKGKFFYC). One can recognise a VWFD 1 domain in the interval 320–500 (STCVVFGEPH…RVYHADWKCD (181 aa)). 2 disulfides stabilise this stretch: C322/C461 and C344/C499. One can recognise a TIL 1 domain in the interval 597–650 (CPSFSHYSVCTSSCPDTCSDLTASRNCATPCTEGCECNQGFVLSTSQCVPLHKC). N670, N687, N813, N843, N855, N898, N920, N931, and N949 each carry an N-linked (GlcNAc...) asparagine glycan. The VWFD 2 domain maps to 711–886 (TVCLLSQNQV…SWTTFEEICN (176 aa)). C713 and C849 are joined by a disulfide. Residues 984-1036 (CPENSHFEECITCTETCETLTLGPICVDSCSEGCQCDEGYALLGSQCVTRSEC) enclose the TIL 2 domain. N-linked (GlcNAc...) asparagine glycans are attached at residues N1048, N1235, and N1364. A VWFD 3 domain is found at 1098 to 1278 (ASCIVSGYGH…SWVKRDTFCQ (181 aa)). 2 disulfides stabilise this stretch: C1100/C1241 and C1122/C1277. The 54-residue stretch at 1372–1425 (CPPNSHYESCVSVCQPRCAAIRLKSDCSHYCVEGCHCDAGYVLNGKSCILPHSC) folds into the TIL 3 domain. Residues 1485–1666 (SYCLAAGGGV…QKRPLAPSCN (182 aa)) enclose the VWFD 4 domain. Disulfide bonds link C1487–C1622, C1509–C1665, C1717–C1775, C1741–C1784, C1786–C1818, C1806–C1898, and C1837–C1857. N-linked (GlcNAc...) asparagine glycosylation is found at N1538, N1565, N1756, N1772, N1794, N1851, N1864, N1880, N1920, and N1939. The ZP domain maps to 1805–2059 (TCKAAQMEVS…YSCKITCPHN (255 aa)). Disulfide bonds link C1980-C2040, C2001-C2056, and C2045-C2052. A lipid anchor (GPI-anchor amidated asparagine) is attached at N2091. Residues 2092-2155 (GGCEQICTSR…HFVYKSGTTS (64 aa)) constitute a propeptide, removed in mature form.

May form homomeric filament after self-association or heteromeric filament after association with beta-tectorin. Interacts with CEACAM16. The presence of a hydrophobic C-terminus preceded by a potential cleavage site strongly suggests that tectorins are synthesized as glycosylphosphatidylinositol-linked, membrane-bound precursors. Tectorins are targeted to the apical surface of the inner ear epithelia by the lipid and proteolytically released into the extracellular compartment.

It is found in the cell membrane. Its subcellular location is the secreted. It localises to the extracellular space. The protein resides in the extracellular matrix. One of the major non-collagenous components of the tectorial membrane. The tectorial membrane is an extracellular matrix of the inner ear that covers the neuroepithelium of the cochlea and contacts the stereocilia bundles of specialized sensory hair cells. Sound induces movement of these hair cells relative to the tectorial membrane, deflects the stereocilia and leads to fluctuations in hair-cell membrane potential, transducing sound into electrical signals. The protein is Alpha-tectorin (TECTA) of Homo sapiens (Human).